A 621-amino-acid chain; its full sequence is CEP295 N-terminal-like protein (621 aa).

A disordered region spans residues 142–253; the sequence is GGRARENEPD…RSKGADLERS (112 aa). Basic residues predominate over residues 159–170; it reads RSARPPRAKEKH. The segment covering 171-185 has biased composition (basic and acidic residues); it reads RAALSEERSCREELG. Positions 203–213 are enriched in polar residues; that stretch reads KPQTTKATGRM. Over residues 219–229 the composition is skewed to basic and acidic residues; the sequence is PPEKRKGRPEP. The stretch at 328 to 359 forms a coiled coil; the sequence is QCTLREKNKWQKELELAFEELFNINRKLKKHL. Disordered stretches follow at residues 385–421, 491–529, and 543–586; these read CGAGTPRGKKMADPEMLPAGEPRSPAEEEAQQAASKT, DQADRVGSTASRQRQKAEMEQRRQKQLESLEQMEHPDMS, and REQR…DRHS. Positions 498–525 form a coiled coil; that stretch reads STASRQRQKAEMEQRRQKQLESLEQMEH. The span at 505–529 shows a compositional bias: basic and acidic residues; sequence QKAEMEQRRQKQLESLEQMEHPDMS. The span at 568–578 shows a compositional bias: polar residues; sequence ELSTTSPSGTS.

Its subcellular location is the cell projection. The protein resides in the cilium. The protein is CEP295 N-terminal-like protein of Homo sapiens (Human).